The chain runs to 561 residues: Putative transport protein CKO_02260 (561 aa).

5 helical membrane-spanning segments follow: residues 8 to 28 (LLNGNYILLLFVVLALGLCLG), 32 to 52 (LGSVQLGNSIGVLVVSLLLGQ), 66 to 86 (FMLFIFCVGVEAGPNFFSIFF), 94 to 114 (MLALVMVGSALLIALGLGKLF), and 158 to 178 (NLSLGYALTYLIGLVSLIVGA). 2 RCK C-terminal domains span residues 200–288 (RGLD…SFRN) and 292–373 (VFDR…RIGF). Transmembrane regions (helical) follow at residues 383–403 (LLAFCAFFIIGLMIGMITFQF), 406–426 (FSFGIGNAAGLLFAGIMLGFL), 447–467 (FGLMVFMAGVGLSAGSGIGNG), 475–495 (MLIAGLVVSLVPVIICFLFGA), and 540–560 (AIANVLLTLAGTLIVIIWPGL).

The protein belongs to the AAE transporter (TC 2.A.81) family. YbjL subfamily.

The protein resides in the cell membrane. The chain is Putative transport protein CKO_02260 from Citrobacter koseri (strain ATCC BAA-895 / CDC 4225-83 / SGSC4696).